We begin with the raw amino-acid sequence, 300 residues long: Cysteine-rich venom protein (300 aa).

Positions 1-21 (MLSTMQTVGAVLMLSIVLVAG) are cleaved as a signal peptide. Positions 22–24 (RKR) are excised as a propeptide. The region spanning 62–183 (LEMHNKIRAD…GNNKYFVCNY (122 aa)) is the SCP domain.

Post-translationally, contains 11 disulfide bonds. Expressed by the venom duct.

Its subcellular location is the secreted. In terms of biological role, protease responsible for cleaving the conotoxins from their propeptide precursors. The target propeptide requires minimum four residues including a leucine N-terminal of the cleavage site for efficient substrate processing (example: Xaa-Xaa-Xaa-Leu-Asn-Lys-Arg-toxin). The protein is Cysteine-rich venom protein of Conus textile (Cloth-of-gold cone).